The following is a 389-amino-acid chain: Na(+)/H(+) antiporter NhaA (389 aa).

The next 11 helical transmembrane spans lie at 24–44 (ILLILCTILSLSIANSLAGPA), 56–76 (LSIEHWVNDALMAVFFLFVGL), 94–114 (LLPIFAAIGGIGVPALIHYTL), 122–142 (AGTGIPMATDIAFALGVLALL), 152–172 (VFLTALAVMDDLGAIIVIAMF), 176–196 (QFSLVYLLSALAVFGLLLVLN), 216–236 (FLMLKSGVHATIAGVLLAFAI), 259–279 (PVAFIILPIFALANTGIVIGS), 291–311 (LGIIGGLVFGKPLGIALLSFV), 326–346 (WTHIVGAGILGGIGFTMSIFI), and 363–383 (MAILMASVAAGGLGFLWLSFF).

Belongs to the NhaA Na(+)/H(+) (TC 2.A.33) antiporter family.

It is found in the cell inner membrane. The enzyme catalyses Na(+)(in) + 2 H(+)(out) = Na(+)(out) + 2 H(+)(in). Its function is as follows. Na(+)/H(+) antiporter that extrudes sodium in exchange for external protons. This is Na(+)/H(+) antiporter NhaA from Dechloromonas aromatica (strain RCB).